The following is a 194-amino-acid chain: MTRDEVLAEFRAAGALLEGHFILSSGLRSGVFLQKARVFSEPERTERLCKALAAKVRAELGDAPTVIVSPATGGIVPGYEMARQMGLKGLYVERENGEFTLRRGFELTKDDKVLVVEDIVSTGLSSRECIEAINKTGATVIAEACLVDRSGGEADVGVPLIALTEYKVPAYPADQLPPELEAIPAIKPGSRGLA.

Residue 117–125 (EDIVSTGLS) coordinates 5-phospho-alpha-D-ribose 1-diphosphate. Orotate-binding residues include S121 and R149.

The protein belongs to the purine/pyrimidine phosphoribosyltransferase family. PyrE subfamily. As to quaternary structure, homodimer. Mg(2+) serves as cofactor.

It catalyses the reaction orotidine 5'-phosphate + diphosphate = orotate + 5-phospho-alpha-D-ribose 1-diphosphate. It functions in the pathway pyrimidine metabolism; UMP biosynthesis via de novo pathway; UMP from orotate: step 1/2. Catalyzes the transfer of a ribosyl phosphate group from 5-phosphoribose 1-diphosphate to orotate, leading to the formation of orotidine monophosphate (OMP). The chain is Orotate phosphoribosyltransferase from Maricaulis maris (strain MCS10) (Caulobacter maris).